We begin with the raw amino-acid sequence, 175 residues long: MDEDVLPGEVLAIEGIFMACGLNEPEYLYHPLLSPIKLYITGLMRDKESLFEAMLANVRFHSTTGINQLGLSMLQVSGDGNMNWGRALAILTFGSFVAQKLSNEPHLRDFALAVLPVYAYEAIGPQWFRARGGWRGLKAYCTQVLTRRRGRRMTALLGSIALLATILAAVAMSRR.

The mediates interaction with human NOP53 and localization to host nucleolus stretch occupies residues 37-42; that stretch reads KLYITG. The helical transmembrane segment at 153-173 threads the bilayer; that stretch reads MTALLGSIALLATILAAVAMS.

The protein belongs to the Bcl-2 family. As to quaternary structure, interacts with human NOP53; may sequester ORF16 in host nucleolus and reduce its antiapoptotic activity. Interacts with ORF55.

Its subcellular location is the host membrane. The protein localises to the host mitochondrion. It localises to the host nucleus. It is found in the host nucleolus. Plays a role in the protection against apoptosis mediated by cytotoxic cells during the immune response to acute and persistent viral infection. Contributes therefore to latency establishment. Also plays a role in the inhibition of host starvation-induced autophagy which ultimately contributes to the viral chronic infection. Also participates in the viral genome replication within host nucleus. This chain is Apoptosis regulator Bcl-2 homolog (vBCL2), found in Homo sapiens (Human).